The sequence spans 246 residues: uncharacterized protein (246 aa).

Residues E120–S149 are disordered. Positions T130–S149 are enriched in low complexity.

This is an uncharacterized protein from Caenorhabditis elegans.